Here is a 158-residue protein sequence, read N- to C-terminus: NADH-quinone oxidoreductase subunit B (158 aa).

[4Fe-4S] cluster contacts are provided by Cys37, Cys38, Cys102, and Cys132.

It belongs to the complex I 20 kDa subunit family. As to quaternary structure, NDH-1 is composed of 14 different subunits. Subunits NuoB, C, D, E, F, and G constitute the peripheral sector of the complex. It depends on [4Fe-4S] cluster as a cofactor.

The protein resides in the cell inner membrane. It catalyses the reaction a quinone + NADH + 5 H(+)(in) = a quinol + NAD(+) + 4 H(+)(out). In terms of biological role, NDH-1 shuttles electrons from NADH, via FMN and iron-sulfur (Fe-S) centers, to quinones in the respiratory chain. Couples the redox reaction to proton translocation (for every two electrons transferred, four hydrogen ions are translocated across the cytoplasmic membrane), and thus conserves the redox energy in a proton gradient. The chain is NADH-quinone oxidoreductase subunit B from Nitrosomonas europaea (strain ATCC 19718 / CIP 103999 / KCTC 2705 / NBRC 14298).